A 533-amino-acid chain; its full sequence is Protein mono-ADP-ribosyltransferase PARP3 (533 aa).

The tract at residues 1–30 is disordered; sequence MAPKRKASVQTEGSKKRRQGTEEEDSFRST. Lys-6 carries the post-translational modification N6-(ADP-ribosyl)lysine. ADP-ribosyl glutamic acid is present on Glu-12. A Nuclear localization signal motif is present at residues 14–18; that stretch reads SKKRR. 2 positions are modified to ADP-ribosyl glutamic acid: Glu-24 and Glu-32. Positions 57 to 147 constitute a WGR domain; that stretch reads GIQVHEDYDC…DRFVAQPNKY (91 aa). Asp-138 carries the ADP-ribosyl aspartic acid modification. An ADP-ribosyl glutamic acid mark is found at Glu-160, Glu-230, Glu-309, and Glu-310. The region spanning 181–299 is the PARP alpha-helical domain; sequence PCSLDPATQN…DIELAQTLQA (119 aa). The PARP catalytic domain maps to 313-533; sequence HPLDRDYQLL…RLRYLLEIHL (221 aa).

Belongs to the ARTD/PARP family. Interacts with PARP1; leading to activate PARP1 in absence of DNA. Interacts with PRKDC. Interacts with XRCC5/Ku80; the interaction is dependent on nucleic acids. Interacts with XRCC6/Ku70; the interaction is dependent on nucleic acids. Interacts with EZH2, HDAC1, HDAC2, SUZ12, YY1, LRIG3 and LIG4. Auto-ADP-ribosylated.

It localises to the nucleus. It is found in the chromosome. Its subcellular location is the cytoplasm. The protein localises to the cytoskeleton. The protein resides in the microtubule organizing center. It localises to the centrosome. It is found in the centriole. The catalysed reaction is L-aspartyl-[protein] + NAD(+) = 4-O-(ADP-D-ribosyl)-L-aspartyl-[protein] + nicotinamide. The enzyme catalyses L-glutamyl-[protein] + NAD(+) = 5-O-(ADP-D-ribosyl)-L-glutamyl-[protein] + nicotinamide. It carries out the reaction L-lysyl-[protein] + NAD(+) = N(6)-(ADP-D-ribosyl)-L-lysyl-[protein] + nicotinamide + H(+). In terms of biological role, mono-ADP-ribosyltransferase that mediates mono-ADP-ribosylation of target proteins and plays a key role in the response to DNA damage. Mediates mono-ADP-ribosylation of glutamate, aspartate or lysine residues on target proteins. In contrast to PARP1 and PARP2, it is not able to mediate poly-ADP-ribosylation. Involved in DNA repair by mediating mono-ADP-ribosylation of a limited number of acceptor proteins involved in chromatin architecture and in DNA metabolism, such as histone H2B, XRCC5 and XRCC6. ADP-ribosylation follows DNA damage and appears as an obligatory step in a detection/signaling pathway leading to the reparation of DNA strand breaks. Involved in single-strand break repair by catalyzing mono-ADP-ribosylation of histone H2B on 'Glu-2' (H2BE2ADPr) of nucleosomes containing nicked DNA. Cooperates with the XRCC5-XRCC6 (Ku80-Ku70) heterodimer to limit end-resection thereby promoting accurate NHEJ. Suppresses G-quadruplex (G4) structures in response to DNA damage. Associates with a number of DNA repair factors and is involved in the response to exogenous and endogenous DNA strand breaks. Together with APLF, promotes the retention of the LIG4-XRCC4 complex on chromatin and accelerate DNA ligation during non-homologous end-joining (NHEJ). May link the DNA damage surveillance network to the mitotic fidelity checkpoint. Acts as a negative regulator of immunoglobulin class switch recombination, probably by controlling the level of AICDA /AID on the chromatin. In addition to proteins, also able to ADP-ribosylate DNA: mediates DNA mono-ADP-ribosylation of DNA strand break termini via covalent addition of a single ADP-ribose moiety to a 5'- or 3'-terminal phosphate residues in DNA containing multiple strand breaks. The polypeptide is Protein mono-ADP-ribosyltransferase PARP3 (Mus musculus (Mouse)).